Consider the following 263-residue polypeptide: Troponin T, slow skeletal muscle (263 aa).

A compositionally biased stretch (acidic residues) spans 1-38 (MSDAEEQEYEEEQPEEEEAAEEEEEAPEEPEPAAEPEE). 2 disordered regions span residues 1–64 (MSDA…RVDF) and 109–154 (AERA…KKKV). At Ser2 the chain carries Phosphoserine; by CK2. A compositionally biased stretch (pro residues) spans 44 to 56 (SRPVVPPLIPPKI). Over residues 109 to 150 (AERAEQQRFRTEKERERQAKLAEEKMRKEEEEAKKRAEDDAK) the composition is skewed to basic and acidic residues.

This sequence belongs to the troponin T family. As to quaternary structure, interacts with TPM3. Expressed dominantly in slow muscles, like masseter, diaphragm, psoas major and spinnalis. Isoform 2 is also expressed in fast muscles.

In terms of biological role, troponin T is the tropomyosin-binding subunit of troponin, the thin filament regulatory complex which confers calcium-sensitivity to striated muscle actomyosin ATPase activity. The protein is Troponin T, slow skeletal muscle (TNNT1) of Bos taurus (Bovine).